Consider the following 201-residue polypeptide: uncharacterized protein (201 aa).

The tract at residues 121–141 is disordered; the sequence is HHRTRPGRGPGPRPGGSAMAG.

This is an uncharacterized protein from Mycobacterium tuberculosis (strain ATCC 25618 / H37Rv).